We begin with the raw amino-acid sequence, 481 residues long: Cardiolipin synthase A (481 aa).

2 helical membrane passes run 10-30 and 40-60; these read FFGYLLGLIHLLGIVAALHAL and IAWAMPLLFIPYLTLIPYLIF. PLD phosphodiesterase domains are found at residues 220–247 and 394–421; these read VNFRNHRKIVVVDGLLGFIGGHNVGDEY and QPGFLHQKVVLVDDDVSAIGSANLDNRS. Catalysis depends on residues His225, Lys227, Asp232, His399, Lys401, and Asp406.

It belongs to the phospholipase D family. Cardiolipin synthase subfamily. ClsA sub-subfamily.

It is found in the cell inner membrane. The catalysed reaction is 2 a 1,2-diacyl-sn-glycero-3-phospho-(1'-sn-glycerol) = a cardiolipin + glycerol. Functionally, catalyzes the reversible phosphatidyl group transfer from one phosphatidylglycerol molecule to another to form cardiolipin (CL) (diphosphatidylglycerol) and glycerol. The chain is Cardiolipin synthase A from Pseudomonas putida (strain ATCC 47054 / DSM 6125 / CFBP 8728 / NCIMB 11950 / KT2440).